Here is a 184-residue protein sequence, read N- to C-terminus: Protein GrpE (184 aa).

Residues 1–35 form a disordered region; the sequence is MTQENQNPPPEQEDVAADPQVNEAAASEPAAVKTP.

The protein belongs to the GrpE family. Homodimer.

It is found in the cytoplasm. Its function is as follows. Participates actively in the response to hyperosmotic and heat shock by preventing the aggregation of stress-denatured proteins, in association with DnaK and GrpE. It is the nucleotide exchange factor for DnaK and may function as a thermosensor. Unfolded proteins bind initially to DnaJ; upon interaction with the DnaJ-bound protein, DnaK hydrolyzes its bound ATP, resulting in the formation of a stable complex. GrpE releases ADP from DnaK; ATP binding to DnaK triggers the release of the substrate protein, thus completing the reaction cycle. Several rounds of ATP-dependent interactions between DnaJ, DnaK and GrpE are required for fully efficient folding. This is Protein GrpE from Polynucleobacter asymbioticus (strain DSM 18221 / CIP 109841 / QLW-P1DMWA-1) (Polynucleobacter necessarius subsp. asymbioticus).